Reading from the N-terminus, the 211-residue chain is Protein-methionine-sulfoxide reductase heme-binding subunit MsrQ (211 aa).

The next 5 helical transmembrane spans lie at 17–37 (LAGL…GLGA), 82–102 (LWCF…ELGV), 116–136 (PYLT…FTST), 153–173 (FVYL…KIIS), and 178–198 (IYAG…LSLF).

It belongs to the MsrQ family. In terms of assembly, heterodimer of a catalytic subunit (MsrP) and a heme-binding subunit (MsrQ). It depends on FMN as a cofactor. The cofactor is heme b.

The protein resides in the cell inner membrane. In terms of biological role, part of the MsrPQ system that repairs oxidized periplasmic proteins containing methionine sulfoxide residues (Met-O), using respiratory chain electrons. Thus protects these proteins from oxidative-stress damage caused by reactive species of oxygen and chlorine generated by the host defense mechanisms. MsrPQ is essential for the maintenance of envelope integrity under bleach stress, rescuing a wide series of structurally unrelated periplasmic proteins from methionine oxidation, including the primary periplasmic chaperone SurA and the lipoprotein Pal. MsrQ provides electrons for reduction to the reductase catalytic subunit MsrP, using the quinone pool of the respiratory chain. This Shigella boydii serotype 4 (strain Sb227) protein is Protein-methionine-sulfoxide reductase heme-binding subunit MsrQ.